The following is a 132-amino-acid chain: Small ribosomal subunit protein uS11 (132 aa).

The protein belongs to the universal ribosomal protein uS11 family. As to quaternary structure, part of the 30S ribosomal subunit.

Located on the platform of the 30S subunit. In Saccharolobus solfataricus (strain ATCC 35092 / DSM 1617 / JCM 11322 / P2) (Sulfolobus solfataricus), this protein is Small ribosomal subunit protein uS11.